A 218-amino-acid polypeptide reads, in one-letter code: Pyridoxine/pyridoxamine 5'-phosphate oxidase (218 aa).

Residues 12–15 (RLSY) and Arg-70 each bind substrate. Residues 65–70 (RTVLLR), 80–81 (YT), Lys-87, and Gln-109 contribute to the FMN site. 3 residues coordinate substrate: Tyr-127, Arg-131, and Ser-135. FMN contacts are provided by residues 145–146 (QS) and Trp-191. 197–199 (RLH) provides a ligand contact to substrate. Arg-201 serves as a coordination point for FMN.

It belongs to the pyridoxamine 5'-phosphate oxidase family. Homodimer. FMN serves as cofactor.

The enzyme catalyses pyridoxamine 5'-phosphate + O2 + H2O = pyridoxal 5'-phosphate + H2O2 + NH4(+). It catalyses the reaction pyridoxine 5'-phosphate + O2 = pyridoxal 5'-phosphate + H2O2. It functions in the pathway cofactor metabolism; pyridoxal 5'-phosphate salvage; pyridoxal 5'-phosphate from pyridoxamine 5'-phosphate: step 1/1. The protein operates within cofactor metabolism; pyridoxal 5'-phosphate salvage; pyridoxal 5'-phosphate from pyridoxine 5'-phosphate: step 1/1. Functionally, catalyzes the oxidation of either pyridoxine 5'-phosphate (PNP) or pyridoxamine 5'-phosphate (PMP) into pyridoxal 5'-phosphate (PLP). This chain is Pyridoxine/pyridoxamine 5'-phosphate oxidase, found in Acinetobacter baumannii (strain SDF).